A 139-amino-acid chain; its full sequence is S-adenosylmethionine decarboxylase proenzyme (139 aa).

S63 functions as the Schiff-base intermediate with substrate; via pyruvic acid in the catalytic mechanism. Pyruvic acid (Ser); by autocatalysis is present on S63. H68 (proton acceptor; for processing activity) is an active-site residue. The active-site Proton donor; for catalytic activity is the C83.

Belongs to the prokaryotic AdoMetDC family. Type 1 subfamily. Heterotetramer of two alpha and two beta chains arranged as a dimer of alpha/beta heterodimers. Requires pyruvate as cofactor. Post-translationally, is synthesized initially as an inactive proenzyme. Formation of the active enzyme involves a self-maturation process in which the active site pyruvoyl group is generated from an internal serine residue via an autocatalytic post-translational modification. Two non-identical subunits are generated from the proenzyme in this reaction, and the pyruvate is formed at the N-terminus of the alpha chain, which is derived from the carboxyl end of the proenzyme. The post-translation cleavage follows an unusual pathway, termed non-hydrolytic serinolysis, in which the side chain hydroxyl group of the serine supplies its oxygen atom to form the C-terminus of the beta chain, while the remainder of the serine residue undergoes an oxidative deamination to produce ammonia and the pyruvoyl group blocking the N-terminus of the alpha chain.

The enzyme catalyses S-adenosyl-L-methionine + H(+) = S-adenosyl 3-(methylsulfanyl)propylamine + CO2. It participates in amine and polyamine biosynthesis; S-adenosylmethioninamine biosynthesis; S-adenosylmethioninamine from S-adenosyl-L-methionine: step 1/1. Catalyzes the decarboxylation of S-adenosylmethionine to S-adenosylmethioninamine (dcAdoMet), the propylamine donor required for the synthesis of the polyamines spermine and spermidine from the diamine putrescine. This is S-adenosylmethionine decarboxylase proenzyme from Pyrococcus furiosus (strain ATCC 43587 / DSM 3638 / JCM 8422 / Vc1).